The sequence spans 344 residues: Arginine N-succinyltransferase (344 aa).

Residue Leu-125 participates in succinyl-CoA binding. Residue His-229 is the Proton donor of the active site.

The protein belongs to the arginine N-succinyltransferase family.

It carries out the reaction succinyl-CoA + L-arginine = N(2)-succinyl-L-arginine + CoA + H(+). It participates in amino-acid degradation; L-arginine degradation via AST pathway; L-glutamate and succinate from L-arginine: step 1/5. Catalyzes the transfer of succinyl-CoA to arginine to produce N(2)-succinylarginine. This Salmonella dublin (strain CT_02021853) protein is Arginine N-succinyltransferase.